The sequence spans 305 residues: Glycine--tRNA ligase alpha subunit (305 aa).

The protein belongs to the class-II aminoacyl-tRNA synthetase family. Tetramer of two alpha and two beta subunits.

Its subcellular location is the cytoplasm. It catalyses the reaction tRNA(Gly) + glycine + ATP = glycyl-tRNA(Gly) + AMP + diphosphate. This is Glycine--tRNA ligase alpha subunit from Janthinobacterium sp. (strain Marseille) (Minibacterium massiliensis).